A 251-amino-acid polypeptide reads, in one-letter code: MIVKTDEELQALKEIGYICAKVRDTMKEATKPGVTTRELDHIAKDLFEEHGAISAPIHDENFPGQTCISVNEEVAHGIPGKRVIREGDLVNIDVSALKNGYYADTGISFVVGKSDQPLKQKVCDVATMAFENAMKKVKPGTKLSNIGKAVHATARQNDLTVIKNLTGHGVGQSLHEAPNHVMNYFDPKDKTLLKEGQVIAVEPFISTHATFVTEGKNEWAFETKDKSYVAQIEHTVIVTKDGPLLTTKIDD.

Substrate is bound at residue His-76. Positions 93, 104, and 168 each coordinate a divalent metal cation. His-175 provides a ligand contact to substrate. A divalent metal cation contacts are provided by Glu-202 and Glu-233.

Belongs to the peptidase M24A family. Methionine aminopeptidase type 1 subfamily. Monomer. Requires Co(2+) as cofactor. The cofactor is Zn(2+). It depends on Mn(2+) as a cofactor. Fe(2+) is required as a cofactor.

It carries out the reaction Release of N-terminal amino acids, preferentially methionine, from peptides and arylamides.. Its function is as follows. Removes the N-terminal methionine from nascent proteins. The N-terminal methionine is often cleaved when the second residue in the primary sequence is small and uncharged (Met-Ala-, Cys, Gly, Pro, Ser, Thr, or Val). Requires deformylation of the N(alpha)-formylated initiator methionine before it can be hydrolyzed. The sequence is that of Methionine aminopeptidase from Staphylococcus epidermidis (strain ATCC 12228 / FDA PCI 1200).